The primary structure comprises 182 residues: Lipid A acyltransferase PagP (182 aa).

The signal sequence occupies residues 1-21 (MTQYFRALAFFLLLVPATAMA). Cysteine 22 is lipidated: N-palmitoyl cysteine. Residue cysteine 22 is the site of S-diacylglycerol cysteine attachment. Catalysis depends on residues histidine 55, aspartate 98, and serine 99.

The protein belongs to the lipid A palmitoyltransferase family. As to quaternary structure, homodimer.

It localises to the cell outer membrane. The enzyme catalyses a lipid A + a 1,2-diacyl-sn-glycero-3-phosphocholine = a hepta-acyl lipid A + a 2-acyl-sn-glycero-3-phosphocholine. The catalysed reaction is a lipid IVA + a 1,2-diacyl-sn-glycero-3-phosphocholine = a lipid IVB + a 2-acyl-sn-glycero-3-phosphocholine. It catalyses the reaction a lipid IIA + a 1,2-diacyl-sn-glycero-3-phosphocholine = a lipid IIB + a 2-acyl-sn-glycero-3-phosphocholine. In terms of biological role, transfers a fatty acid residue from the sn-1 position of a phospholipid to the N-linked hydroxyfatty acid chain on the proximal unit of lipid A or its precursors. Required for resistance to cationic antimicrobial peptides (CAMPs). Modifications of lipid A with an acyl chain to evade host immune defenses by resisting antibody-mediated complement lysis during respiratory infection. This is Lipid A acyltransferase PagP from Bordetella bronchiseptica (strain ATCC BAA-588 / NCTC 13252 / RB50) (Alcaligenes bronchisepticus).